The primary structure comprises 317 residues: Pyridoxal 5'-phosphate synthase subunit PdxS (317 aa).

D47 is a D-ribose 5-phosphate binding site. Catalysis depends on K104, which acts as the Schiff-base intermediate with D-ribose 5-phosphate. Position 176 (G176) interacts with D-ribose 5-phosphate. R188 provides a ligand contact to D-glyceraldehyde 3-phosphate. D-ribose 5-phosphate is bound by residues G237 and 258–259; that span reads GS.

This sequence belongs to the PdxS/SNZ family. In terms of assembly, in the presence of PdxT, forms a dodecamer of heterodimers.

It catalyses the reaction aldehydo-D-ribose 5-phosphate + D-glyceraldehyde 3-phosphate + L-glutamine = pyridoxal 5'-phosphate + L-glutamate + phosphate + 3 H2O + H(+). It participates in cofactor biosynthesis; pyridoxal 5'-phosphate biosynthesis. Functionally, catalyzes the formation of pyridoxal 5'-phosphate from ribose 5-phosphate (RBP), glyceraldehyde 3-phosphate (G3P) and ammonia. The ammonia is provided by the PdxT subunit. Can also use ribulose 5-phosphate and dihydroxyacetone phosphate as substrates, resulting from enzyme-catalyzed isomerization of RBP and G3P, respectively. This is Pyridoxal 5'-phosphate synthase subunit PdxS from Corynebacterium glutamicum (strain ATCC 13032 / DSM 20300 / JCM 1318 / BCRC 11384 / CCUG 27702 / LMG 3730 / NBRC 12168 / NCIMB 10025 / NRRL B-2784 / 534).